A 373-amino-acid polypeptide reads, in one-letter code: Inhibitor of nuclear factor kappa-B kinase-interacting protein (373 aa).

Residues 1–11 (MSEVKSRKKPG) show a composition bias toward basic residues. A disordered region spans residues 1-38 (MSEVKSRKKPGPKVAAPEPEKRSDGRKNPEARGGAGWA). Over residues 18–30 (EPEKRSDGRKNPE) the composition is skewed to basic and acidic residues. The chain crosses the membrane as a helical span at residues 43–59 (GLSLLSLATSLGLAWLV). Coiled-coil stretches lie at residues 64–257 (EKFA…DKLS) and 290–325 (TERK…LEGI). N-linked (GlcNAc...) asparagine glycosylation occurs at Asn151.

In terms of processing, N-glycosylated at Asn-151.

It localises to the endoplasmic reticulum membrane. Functionally, target of p53/TP53 with pro-apoptotic function. The sequence is that of Inhibitor of nuclear factor kappa-B kinase-interacting protein (Ikbip) from Rattus norvegicus (Rat).